A 233-amino-acid chain; its full sequence is Ribonuclease 3 (233 aa).

The region spanning 8–135 is the RNase III domain; the sequence is AQRFLEDKQL…VIGAIYLDQG (128 aa). Glu-48 contacts Mg(2+). Asp-52 is an active-site residue. The Mg(2+) site is built by Asp-121 and Glu-124. Glu-124 is a catalytic residue. The region spanning 161-230 is the DRBM domain; sequence DYKSKLQELV…AQKVLQDNLV (70 aa).

Belongs to the ribonuclease III family. As to quaternary structure, homodimer. Requires Mg(2+) as cofactor.

It localises to the cytoplasm. The enzyme catalyses Endonucleolytic cleavage to 5'-phosphomonoester.. Its function is as follows. Digests double-stranded RNA. Involved in the processing of primary rRNA transcript to yield the immediate precursors to the large and small rRNAs (23S and 16S). Processes some mRNAs, and tRNAs when they are encoded in the rRNA operon. Processes pre-crRNA and tracrRNA of type II CRISPR loci if present in the organism. This is Ribonuclease 3 from Syntrophomonas wolfei subsp. wolfei (strain DSM 2245B / Goettingen).